The primary structure comprises 308 residues: Olfactory receptor 13H1 (308 aa).

At 1–25 the chain is on the extracellular side; it reads MAMDNVTAVFQFLLIGISNYPQWRD. The N-linked (GlcNAc...) asparagine glycan is linked to Asn5. The chain crosses the membrane as a helical span at residues 26 to 46; sequence TFFTLVLIIYLSTLLGNGFMI. Over 47-54 the chain is Cytoplasmic; it reads FLIHFDPN. A helical transmembrane segment spans residues 55-75; that stretch reads LHTPIYFFLSNLSFLDLCYGT. The Extracellular segment spans residues 76-99; it reads ASMPQALVHCFSTHPYLSYPRCLA. Cys97 and Cys188 are disulfide-bonded. Residues 100–120 form a helical membrane-spanning segment; that stretch reads QTSVSLALATAECLLLAAMAY. At 121 to 139 the chain is on the cytoplasmic side; sequence DRVVAISNPLRYSVVMNGP. Residues 140–159 form a helical membrane-spanning segment; sequence VCVCLVATSWGTSLVLTAML. Over 160-196 the chain is Extracellular; the sequence is ILSLRLHFCGANVINHFACEILSLIKLTCSDTSLNEF. Residues 197-216 form a helical membrane-spanning segment; sequence MILITSIFTLLLPFGFVLLS. Topologically, residues 217-236 are cytoplasmic; sequence YIRIAMAIIRIRSLQGRLKA. Residues 237-257 form a helical membrane-spanning segment; the sequence is FTTCGSHLTVVTIFYGSAISM. The Extracellular portion of the chain corresponds to 258-270; sequence YMKTQSKSYPDQD. Residues 271–291 form a helical membrane-spanning segment; sequence KFISVFYGALTPMLNPLIYSL. Residues 292–308 lie on the Cytoplasmic side of the membrane; sequence RKKDVKRAIRKVMLKRT.

It belongs to the G-protein coupled receptor 1 family.

It is found in the cell membrane. Odorant receptor. This chain is Olfactory receptor 13H1 (OR13H1), found in Homo sapiens (Human).